The sequence spans 205 residues: Thymidine kinase (205 aa).

ATP-binding positions include 9–16 (SAMNAGKS) and 87–90 (DESQ). The active-site Proton acceptor is E88. The Zn(2+) site is built by C145, C147, C182, and H185.

The protein belongs to the thymidine kinase family. Homotetramer.

It localises to the cytoplasm. It carries out the reaction thymidine + ATP = dTMP + ADP + H(+). This Salmonella paratyphi A (strain ATCC 9150 / SARB42) protein is Thymidine kinase.